Consider the following 373-residue polypeptide: Probable ethanolamine permease EutH (373 aa).

The next 10 membrane-spanning stretches (helical) occupy residues 5-25 (EIII…KIIG), 38-58 (IMAM…APVL), 61-81 (ILSP…AMFA), 111-131 (ILGS…LGII), 143-163 (VLSG…VAGF), 166-186 (IMIF…MLGL), 197-217 (FTIF…AGAI), 236-256 (IEIV…VFVI), 307-327 (VAFA…TAGV), and 331-351 (MIFP…AVGI).

Belongs to the EutH family.

The protein localises to the cell membrane. The catalysed reaction is ethanolamine(in) = ethanolamine(out). Probably involved in the diffusion of protonated ethanolamine (EA) into the cell at low pH. At low pH most EA is protonated, and this permease becomes necessary. Contributes to bacterial survival and replication in acidic macrophage vacuoles, but not to bacterial uptake by macrophages. This chain is Probable ethanolamine permease EutH, found in Listeria monocytogenes serotype 1/2a (strain 10403S).